Consider the following 133-residue polypeptide: Small ribosomal subunit protein uS9 (133 aa).

Residues 97–113 are compositionally biased toward basic and acidic residues; the sequence is SKQELKSHGFLTRDPRK. The tract at residues 97-133 is disordered; that stretch reads SKQELKSHGFLTRDPRKKERKKYGHKKARKSFQFSKR. Positions 114–133 are enriched in basic residues; the sequence is KERKKYGHKKARKSFQFSKR.

Belongs to the universal ribosomal protein uS9 family.

The chain is Small ribosomal subunit protein uS9 from Chlamydia abortus (strain DSM 27085 / S26/3) (Chlamydophila abortus).